A 430-amino-acid polypeptide reads, in one-letter code: Histidine--tRNA ligase (430 aa).

It belongs to the class-II aminoacyl-tRNA synthetase family. As to quaternary structure, homodimer.

The protein localises to the cytoplasm. The enzyme catalyses tRNA(His) + L-histidine + ATP = L-histidyl-tRNA(His) + AMP + diphosphate + H(+). This is Histidine--tRNA ligase from Acinetobacter baumannii (strain ATCC 17978 / DSM 105126 / CIP 53.77 / LMG 1025 / NCDC KC755 / 5377).